An 83-amino-acid polypeptide reads, in one-letter code: Mitochondrial import inner membrane translocase subunit Tim8 B (83 aa).

N-acetylalanine is present on alanine 2. A Twin CX3C motif motif is present at residues 36 to 59 (CWDKCVEKPGSRLDSRTENCLSSC). 2 disulfides stabilise this stretch: cysteine 36–cysteine 59 and cysteine 40–cysteine 55.

This sequence belongs to the small Tim family. As to quaternary structure, heterohexamer; possibly composed of 3 copies of TIMM8B and 3 copies of TIMM13, named soluble 70 kDa complex. Associates with the TIM22 complex, whose core is composed of TIMM22.

Its subcellular location is the mitochondrion inner membrane. In terms of biological role, probable mitochondrial intermembrane chaperone that participates in the import and insertion of some multi-pass transmembrane proteins into the mitochondrial inner membrane. Also required for the transfer of beta-barrel precursors from the TOM complex to the sorting and assembly machinery (SAM complex) of the outer membrane. Acts as a chaperone-like protein that protects the hydrophobic precursors from aggregation and guide them through the mitochondrial intermembrane space. In Mus musculus (Mouse), this protein is Mitochondrial import inner membrane translocase subunit Tim8 B (Timm8b).